Here is a 163-residue protein sequence, read N- to C-terminus: NADH-quinone oxidoreductase subunit 9 (163 aa).

4Fe-4S ferredoxin-type domains follow at residues 54 to 84 (LRRYPNGEERCIACKLCEAVCPAQAITIDAE) and 94 to 123 (TRYDIDMTKCIYCGFCQEACPVDAIVEGPN). 8 residues coordinate [4Fe-4S] cluster: C64, C67, C70, C74, C103, C106, C109, and C113.

It belongs to the complex I 23 kDa subunit family. In terms of assembly, NDH-1 is composed of at least 14 different subunits, Nqo1 to Nqo14. The complex has a L-shaped structure, with the hydrophobic arm (subunits Nqo7, Nqo8, Nqo10 to Nqo14) embedded in the inner membrane and the hydrophilic peripheral arm (subunits Nqo1 to Nqo6, Nqo9) protruding into the bacterial cytoplasm. The hydrophilic domain contains all the redox centers. Requires [4Fe-4S] cluster as cofactor.

The protein resides in the cell inner membrane. It catalyses the reaction a quinone + NADH + 5 H(+)(in) = a quinol + NAD(+) + 4 H(+)(out). Functionally, NDH-1 shuttles electrons from NADH, via FMN and iron-sulfur (Fe-S) centers, to quinones in the respiratory chain. The immediate electron acceptor for the enzyme in this species is believed to be ubiquinone. Couples the redox reaction to proton translocation (for every two electrons transferred, four hydrogen ions are translocated across the cytoplasmic membrane), and thus conserves the redox energy in a proton gradient. This chain is NADH-quinone oxidoreductase subunit 9, found in Paracoccus denitrificans.